We begin with the raw amino-acid sequence, 484 residues long: Protein LAZ1 homolog 1 (484 aa).

The signal sequence occupies residues 1-19 (MEWRGILCSLLFIVSVGES). Helical transmembrane passes span 42–62 (PILS…YLIF), 76–96 (FLIG…LSLV), 190–210 (MILK…GVYG), 219–239 (GYPY…YCLV), 264–284 (IVFL…MGLV), and 299–319 (YIIC…FPAA). A disordered region spans residues 344–364 (PDPEEVKDSERTTRTRYGRHD). The segment covering 347–364 (EEVKDSERTTRTRYGRHD) has biased composition (basic and acidic residues). A coiled-coil region spans residues 406 to 428 (IAKINRTFHQISENVKRFEQQKK). A disordered region spans residues 459–484 (VSDSGLGSTNRHHQSRVSGLWTRMRR).

It belongs to the TMEM184 family.

The protein resides in the membrane. The protein is Protein LAZ1 homolog 1 of Arabidopsis thaliana (Mouse-ear cress).